Here is a 180-residue protein sequence, read N- to C-terminus: Large ribosomal subunit protein uL5 (180 aa).

It belongs to the universal ribosomal protein uL5 family. As to quaternary structure, part of the 50S ribosomal subunit; part of the 5S rRNA/L5/L18/L25 subcomplex. Contacts the 5S rRNA and the P site tRNA. Forms a bridge to the 30S subunit in the 70S ribosome.

Its function is as follows. This is one of the proteins that bind and probably mediate the attachment of the 5S RNA into the large ribosomal subunit, where it forms part of the central protuberance. In the 70S ribosome it contacts protein S13 of the 30S subunit (bridge B1b), connecting the 2 subunits; this bridge is implicated in subunit movement. Contacts the P site tRNA; the 5S rRNA and some of its associated proteins might help stabilize positioning of ribosome-bound tRNAs. This is Large ribosomal subunit protein uL5 from Lactococcus lactis subsp. lactis (strain IL1403) (Streptococcus lactis).